The chain runs to 244 residues: Tegument protein UL51 (244 aa).

C9 carries S-palmitoyl cysteine; by host lipidation. A disordered region spans residues 178–244 (GVTEAPSLGH…SRAAPCVLGQ (67 aa)). Over residues 221–244 (PRPTASPTAPRPGPSRAAPCVLGQ) the composition is skewed to low complexity.

Belongs to the herpesviridae UL51 family. As to quaternary structure, oligomerizes. Interacts with UL7; this interaction mediates UL7 incorporation to virions. Interacts with UL14. Phosphorylated. In terms of processing, palmitoylation is necessary for Golgi localization.

It localises to the virion tegument. The protein localises to the host cytoplasm. Its subcellular location is the host Golgi apparatus. Its function is as follows. Plays several roles during the time course of infection, including egress of virus particles from the perinuclear space and secondary envelopment of cytoplasmic capsids that bud into specific trans-Golgi network (TGN)-derived membranes. Plays also an essential role in the maintenance of host cytoplasmic viral assembly center (cVAC) morphology in primary host neuronal cells. This chain is Tegument protein UL51, found in Homo sapiens (Human).